A 614-amino-acid chain; its full sequence is Leucine-rich repeat and immunoglobulin-like domain-containing nogo receptor-interacting protein 1 (614 aa).

Residues 1-35 form the signal peptide; sequence MLAGGVRSMPSPLLACWQPILLLVLGSVLSGSATG. Intrachain disulfides connect Cys36–Cys42 and Cys40–Cys51. Residues 36–65 form the LRRNT domain; it reads CPPRCECSAQDRAVLCHRKRFVAVPEGIPT. Topologically, residues 36–555 are extracellular; that stretch reads CPPRCECSAQ…FDIKTLIIAT (520 aa). LRR repeat units follow at residues 66-87, 90-111, 114-135, 138-159, 162-183, 186-207, 210-231, 258-279, 282-303, 306-327, and 330-351; these read ETRL…EFAS, HLEE…AFNN, NLRT…VFTG, NLTK…MFQD, NLKS…AFSG, SLEQ…ALSH, GLIV…SFKR, NLTS…AVRH, YLRF…MLHE, RLQE…AFRG, and YLRV…VFHS. N-linked (GlcNAc...) asparagine glycosylation occurs at Asn138. Asn196 carries N-linked (GlcNAc...) asparagine glycosylation. 3 N-linked (GlcNAc...) asparagine glycosylation sites follow: Asn258, Asn268, and Asn287. A glycan (N-linked (GlcNAc...) asparagine) is linked at Asn335. Positions 363–417 constitute an LRRCT domain; it reads NPLACDCRLLWVFRRRWRLNFNRQQPTCATPEFVQGKEFKDFPDVLLPNYFTCRR. 3 cysteine pairs are disulfide-bonded: Cys367-Cys390, Cys369-Cys415, and Cys440-Cys491. Residues 405–507 form the Ig-like C2-type domain; sequence PDVLLPNYFT…GNDSMPAHLH (103 aa). N-linked (GlcNAc...) asparagine glycosylation is found at Asn486, Asn499, Asn520, and Asn536. Residues 556-576 form a helical membrane-spanning segment; that stretch reads TMGFISFLGVVLFCLVLLFLW. Residues 577-614 are Cytoplasmic-facing; sequence SRGKGNTKHNIEIEYVPRKSDAGISSADAPRKFNMKMI. Ser596 bears the Phosphoserine mark.

As to quaternary structure, homotetramer. Forms a ternary complex with RTN4R/NGFR and RTN4R/TNFRSF19. Interacts with NGRF, RTN4R and MYT1L. Post-translationally, N-glycosylated. Contains predominantly high-mannose glycans.

The protein localises to the cell membrane. Its function is as follows. Functional component of the Nogo receptor signaling complex (RTN4R/NGFR) in RhoA activation responsible for some inhibition of axonal regeneration by myelin-associated factors. Is also an important negative regulator of oligodentrocyte differentiation and axonal myelination. Acts in conjunction with RTN4 and RTN4R in regulating neuronal precursor cell motility during cortical development. The sequence is that of Leucine-rich repeat and immunoglobulin-like domain-containing nogo receptor-interacting protein 1 (LINGO1) from Pongo abelii (Sumatran orangutan).